The primary structure comprises 118 residues: Large ribosomal subunit protein bL20 (118 aa).

It belongs to the bacterial ribosomal protein bL20 family.

In terms of biological role, binds directly to 23S ribosomal RNA and is necessary for the in vitro assembly process of the 50S ribosomal subunit. It is not involved in the protein synthesizing functions of that subunit. This Pseudomonas fluorescens (strain ATCC BAA-477 / NRRL B-23932 / Pf-5) protein is Large ribosomal subunit protein bL20.